The chain runs to 122 residues: Nuclear transport factor 2A (122 aa).

Residue methionine 1 is modified to N-acetylmethionine. The NTF2 domain maps to 6–119; the sequence is VAKAFVEHYY…YYVFNDIFRL (114 aa).

Interacts with RAN1. As to expression, expressed in roots, stems, leaves and flowers, and, at low levels, in siliques.

It is found in the cytoplasm. The protein localises to the nucleus. It localises to the nucleus envelope. In terms of biological role, facilitates protein transport into the nucleus. Interacts with various nucleoporins and with Ran-GDP. Could be part of a multicomponent system of cytosolic factors that assemble at the pore complex during nuclear import. The polypeptide is Nuclear transport factor 2A (Arabidopsis thaliana (Mouse-ear cress)).